A 202-amino-acid polypeptide reads, in one-letter code: ATP-dependent Clp protease proteolytic subunit (202 aa).

S98 (nucleophile) is an active-site residue. Residue H123 is part of the active site.

Belongs to the peptidase S14 family. Fourteen ClpP subunits assemble into 2 heptameric rings which stack back to back to give a disk-like structure with a central cavity, resembling the structure of eukaryotic proteasomes.

The protein resides in the cytoplasm. It catalyses the reaction Hydrolysis of proteins to small peptides in the presence of ATP and magnesium. alpha-casein is the usual test substrate. In the absence of ATP, only oligopeptides shorter than five residues are hydrolyzed (such as succinyl-Leu-Tyr-|-NHMec, and Leu-Tyr-Leu-|-Tyr-Trp, in which cleavage of the -Tyr-|-Leu- and -Tyr-|-Trp bonds also occurs).. Functionally, cleaves peptides in various proteins in a process that requires ATP hydrolysis. Has a chymotrypsin-like activity. Plays a major role in the degradation of misfolded proteins. This is ATP-dependent Clp protease proteolytic subunit from Desulfovibrio desulfuricans (strain ATCC 27774 / DSM 6949 / MB).